The chain runs to 346 residues: MQTLNTLDLQTTSLKIVNGQLWILDQQALPQRQEWLLADTVASLIEHIQALRVRGAPLIGLSASLLLALLAERGLSQALLEQALIALRESRPTAVNLMNNLARMQQALLQPNWVTAMAAEALRLVDEDRELCERIAQHGAALVKPGSNLLTHCNTGGLATAGIGTAIGVLLRAHQQGNLRQVWVDETRPLLQGGRLTAWELGELGIPYQLICDSMAASLMAQGQVDAIWVGADRIAANGDVANKIGTYSLAVLAHYHRIPFYVAAPHTTHDPDCPDGAAIPIEQRAASEVTGVSGGFGHCQWAPEDAAVYNPAFDVTPAALISGWVLDSGVITPEQVAAGFFQPHR.

Substrate contacts are provided by residues 54 to 56, R91, and Q192; that span reads RGA. The active-site Proton donor is the D233. 243 to 244 provides a ligand contact to substrate; the sequence is NK.

It belongs to the eIF-2B alpha/beta/delta subunits family. MtnA subfamily.

It carries out the reaction 5-(methylsulfanyl)-alpha-D-ribose 1-phosphate = 5-(methylsulfanyl)-D-ribulose 1-phosphate. Its pathway is amino-acid biosynthesis; L-methionine biosynthesis via salvage pathway; L-methionine from S-methyl-5-thio-alpha-D-ribose 1-phosphate: step 1/6. Its function is as follows. Catalyzes the interconversion of methylthioribose-1-phosphate (MTR-1-P) into methylthioribulose-1-phosphate (MTRu-1-P). This is Methylthioribose-1-phosphate isomerase from Yersinia pseudotuberculosis serotype O:1b (strain IP 31758).